The sequence spans 147 residues: Deoxyuridine 5'-triphosphate nucleotidohydrolase (147 aa).

Substrate-binding positions include 67–69 (RSG), asparagine 80, and 84–86 (TID).

It belongs to the dUTPase family. The cofactor is Mg(2+).

The catalysed reaction is dUTP + H2O = dUMP + diphosphate + H(+). It functions in the pathway pyrimidine metabolism; dUMP biosynthesis; dUMP from dCTP (dUTP route): step 2/2. In terms of biological role, this enzyme is involved in nucleotide metabolism: it produces dUMP, the immediate precursor of thymidine nucleotides and it decreases the intracellular concentration of dUTP so that uracil cannot be incorporated into DNA. The sequence is that of Deoxyuridine 5'-triphosphate nucleotidohydrolase from Syntrophotalea carbinolica (strain DSM 2380 / NBRC 103641 / GraBd1) (Pelobacter carbinolicus).